A 736-amino-acid chain; its full sequence is Phosphoribosylformylglycinamidine synthase subunit PurL (736 aa).

The active site involves His-48. Residues Tyr-51 and Lys-90 each contribute to the ATP site. Glu-92 is a Mg(2+) binding site. Substrate contacts are provided by residues 93–96 and Arg-115; that span reads SHNH. Catalysis depends on His-94, which acts as the Proton acceptor. Asp-116 contacts Mg(2+). Residue Gln-239 participates in substrate binding. Position 267 (Asp-267) interacts with Mg(2+). Substrate is bound at residue 311–313; that stretch reads ESQ. 2 residues coordinate ATP: Asp-492 and Gly-529. Asn-530 is a binding site for Mg(2+). Ser-532 contacts substrate.

Belongs to the FGAMS family. In terms of assembly, monomer. Part of the FGAM synthase complex composed of 1 PurL, 1 PurQ and 2 PurS subunits.

The protein localises to the cytoplasm. It catalyses the reaction N(2)-formyl-N(1)-(5-phospho-beta-D-ribosyl)glycinamide + L-glutamine + ATP + H2O = 2-formamido-N(1)-(5-O-phospho-beta-D-ribosyl)acetamidine + L-glutamate + ADP + phosphate + H(+). It participates in purine metabolism; IMP biosynthesis via de novo pathway; 5-amino-1-(5-phospho-D-ribosyl)imidazole from N(2)-formyl-N(1)-(5-phospho-D-ribosyl)glycinamide: step 1/2. Part of the phosphoribosylformylglycinamidine synthase complex involved in the purines biosynthetic pathway. Catalyzes the ATP-dependent conversion of formylglycinamide ribonucleotide (FGAR) and glutamine to yield formylglycinamidine ribonucleotide (FGAM) and glutamate. The FGAM synthase complex is composed of three subunits. PurQ produces an ammonia molecule by converting glutamine to glutamate. PurL transfers the ammonia molecule to FGAR to form FGAM in an ATP-dependent manner. PurS interacts with PurQ and PurL and is thought to assist in the transfer of the ammonia molecule from PurQ to PurL. The sequence is that of Phosphoribosylformylglycinamidine synthase subunit PurL from Beijerinckia indica subsp. indica (strain ATCC 9039 / DSM 1715 / NCIMB 8712).